We begin with the raw amino-acid sequence, 440 residues long: Ribosomal protein uS12 methylthiotransferase RimO (440 aa).

The region spanning 2–118 is the MTTase N-terminal domain; that stretch reads KKAGIIHLGC…FVSLITSNGE (117 aa). [4Fe-4S] cluster is bound by residues Cys-11, Cys-47, Cys-81, Cys-154, Cys-158, and Cys-161. The Radical SAM core domain occupies 140 to 370; that stretch reads ISPNFWVYVK…MSTQKEISKK (231 aa). In terms of domain architecture, TRAM spans 373 to 440; it reads AKLLGREFDV…RAYDLLGELV (68 aa).

It belongs to the methylthiotransferase family. RimO subfamily. [4Fe-4S] cluster is required as a cofactor.

The protein localises to the cytoplasm. The catalysed reaction is L-aspartate(89)-[ribosomal protein uS12]-hydrogen + (sulfur carrier)-SH + AH2 + 2 S-adenosyl-L-methionine = 3-methylsulfanyl-L-aspartate(89)-[ribosomal protein uS12]-hydrogen + (sulfur carrier)-H + 5'-deoxyadenosine + L-methionine + A + S-adenosyl-L-homocysteine + 2 H(+). Its function is as follows. Catalyzes the methylthiolation of an aspartic acid residue of ribosomal protein uS12. This is Ribosomal protein uS12 methylthiotransferase RimO from Dictyoglomus thermophilum (strain ATCC 35947 / DSM 3960 / H-6-12).